We begin with the raw amino-acid sequence, 512 residues long: MAPSHPAFQFWIHLYLWCLLLMPAVLAQQGSHTHAEDRLFKHLFGGYNRWARPVPNTSDVVIVRFGLSIAQLIDVDEKNQMMTTNVWLKQEWNDYKLRWDPAEFGNITSLRVPSEMIWIPDIVLYNNADGEFAVTHMTKAHLFFTGTVHWVPPAIYKSSCSIDVTFFPFDQQNCKMKFGSWTYDKAKIDLEQMERTVDLKDYWESGEWAIINATGTYNSKKYDCCAEIYPDVTYYFVIRRLPLFYTINLIIPCLLISCLTVLVFYLPSECGEKITLCISVLLSLTVFLLLITEIIPSTSLVIPLIGEYLLFTMIFVTLSIVITVFVLNVHHRSPSTHNMPNWVRVALLGRVPRWLMMNRPLPPMELHGSPGLKLSPTYHWLETNMDAEEREETEEEEEEEEDENICMCAGLPDSSMGVLYGHGSLHLRAMGPEAKTPSQASEILLSPQIQKALEGVHYIADHLRSEDADSSVKEDWKYVAMVVDRIFLWLFIIVCFLGTIGLFLPPFLAGMI.

Residues 1–27 form the signal peptide; the sequence is MAPSHPAFQFWIHLYLWCLLLMPAVLA. The Extracellular segment spans residues 28 to 241; that stretch reads QQGSHTHAED…VTYYFVIRRL (214 aa). N-linked (GlcNAc...) asparagine glycosylation is found at Asn-56 and Asn-106. A disulfide bridge links Cys-160 with Cys-174. Asn-212 carries an N-linked (GlcNAc...) asparagine glycan. A disulfide bridge links Cys-224 with Cys-225. Transmembrane regions (helical) follow at residues 242–266, 274–292, and 308–329; these read PLFY…VFYL, ITLC…LLIT, and YLLF…VLNV. The Cytoplasmic segment spans residues 330–485; sequence HHRSPSTHNM…WKYVAMVVDR (156 aa). A helical membrane pass occupies residues 486–504; it reads IFLWLFIIVCFLGTIGLFL.

The protein belongs to the ligand-gated ion channel (TC 1.A.9) family. Acetylcholine receptor (TC 1.A.9.1) subfamily. Alpha-2/CHRNA2 sub-subfamily. In terms of assembly, neuronal AChR is composed of two different types of subunits: alpha and non-alpha (beta). CHRNA2/alpha-2 subunit can be combined to CHRNB2/beta-2 or CHRNB4/beta-4 to give rise to functional receptors. Both CHRNA2:CHRNB2 and CHRNA2:CHRNB4 nAChR complexes are heteropentamers with two subtypes: LS (low agonist sensitivity) with a (CHRNA2)3:(CHRNB2/4)2 and HS (high agonist sensitivity) with a (CHRNA2)2:(CHRNB2/4)3 stoichiometries; the subtypes differ in their subunit binding interfaces which are involved in ligand binding.

The protein resides in the synaptic cell membrane. It is found in the cell membrane. The enzyme catalyses Ca(2+)(in) = Ca(2+)(out). It carries out the reaction K(+)(in) = K(+)(out). The catalysed reaction is Na(+)(in) = Na(+)(out). In terms of biological role, component of neuronal acetylcholine receptors (nAChRs) that function as pentameric, ligand-gated cation channels with high calcium permeability among other activities. nAChRs are excitatory neurotrasnmitter receptors formed by a collection of nAChR subunits known to mediate synaptic transmission in the nervous system and the neuromuscular junction. Each nAchR subunit confers differential attributes to channel properties, including activation, deactivation and desensitization kinetics, pH sensitivity, cation permeability, and binding to allosteric modulators. CHRNA2 forms heteropentameric neuronal acetylcholine receptors with CHRNB2 and CHRNB4 and plays a role in nicotine dependence. The sequence is that of Neuronal acetylcholine receptor subunit alpha-2 (Chrna2) from Mus musculus (Mouse).